An 85-amino-acid polypeptide reads, in one-letter code: Large ribosomal subunit protein bL27 (85 aa).

Residues 1–11 (MASKASGGSTR) show a composition bias toward polar residues. Residues 1 to 20 (MASKASGGSTRNGRDSISKR) are disordered.

This sequence belongs to the bacterial ribosomal protein bL27 family.

The chain is Large ribosomal subunit protein bL27 from Sulfurihydrogenibium sp. (strain YO3AOP1).